The following is a 476-amino-acid chain: tRNA(Ile)-lysidine synthase (476 aa).

Position 25-30 (25-30 (SGGPDS)) interacts with ATP.

The protein belongs to the tRNA(Ile)-lysidine synthase family.

The protein resides in the cytoplasm. It catalyses the reaction cytidine(34) in tRNA(Ile2) + L-lysine + ATP = lysidine(34) in tRNA(Ile2) + AMP + diphosphate + H(+). Ligates lysine onto the cytidine present at position 34 of the AUA codon-specific tRNA(Ile) that contains the anticodon CAU, in an ATP-dependent manner. Cytidine is converted to lysidine, thus changing the amino acid specificity of the tRNA from methionine to isoleucine. In Bacillus licheniformis (strain ATCC 14580 / DSM 13 / JCM 2505 / CCUG 7422 / NBRC 12200 / NCIMB 9375 / NCTC 10341 / NRRL NRS-1264 / Gibson 46), this protein is tRNA(Ile)-lysidine synthase.